An 88-amino-acid chain; its full sequence is Alpha-latrotoxin-associated low molecular weight protein-2 (88 aa).

The first 19 residues, 1 to 19 (MLKLICIAFLVTVLTLVAG), serve as a signal peptide directing secretion. A Pyrrolidone carboxylic acid modification is found at Gln-20. Disulfide bonds link Cys-30-Cys-66, Cys-46-Cys-62, and Cys-49-Cys-75.

Belongs to the arthropod CHH/MIH/GIH/VIH hormone family. The N-terminus is blocked. In terms of tissue distribution, expressed by the venom gland.

Its subcellular location is the secreted. In terms of biological role, may increase the toxicity of alpha-latrotoxin and/or other venom components. Is non-toxic to mice and to the cockroach Periplaneta americana. The polypeptide is Alpha-latrotoxin-associated low molecular weight protein-2 (Latrodectus tredecimguttatus (Mediterranean black widow spider)).